The primary structure comprises 61 residues: MAVPKKKTSKSRKNMRRAHDFLTTQSVSVCPQCKSPKLPHRVCPTCGTYKGKEVLDVAKAS.

Basic residues predominate over residues 1 to 16 (MAVPKKKTSKSRKNMR). Residues 1–20 (MAVPKKKTSKSRKNMRRAHD) are disordered.

This sequence belongs to the bacterial ribosomal protein bL32 family.

In Pelobacter propionicus (strain DSM 2379 / NBRC 103807 / OttBd1), this protein is Large ribosomal subunit protein bL32.